Reading from the N-terminus, the 462-residue chain is NADH-quinone oxidoreductase subunit N 1 (462 aa).

Helical transmembrane passes span 4 to 24 (FVVA…VLCL), 32 to 52 (AGFY…WAVA), 60 to 80 (IACF…ALLA), 88 to 108 (FAGD…LLLA), 113 to 133 (WIML…LIAA), 148 to 168 (FLPG…IYAA), 178 to 198 (LAAP…GVGF), 220 to 240 (VAAF…LHVC), 251 to 271 (LWPA…LGAV), 279 to 299 (LLAY…MAVN), 307 to 327 (LFYL…VGAL), 351 to 371 (AGVL…AGFV), 374 to 394 (FLVF…FGII), 416 to 436 (LIAH…ALGV), and 439 to 459 (AGLV…AALF).

Belongs to the complex I subunit 2 family. As to quaternary structure, NDH-1 is composed of 14 different subunits. Subunits NuoA, H, J, K, L, M, N constitute the membrane sector of the complex.

The protein localises to the cell inner membrane. The enzyme catalyses a quinone + NADH + 5 H(+)(in) = a quinol + NAD(+) + 4 H(+)(out). NDH-1 shuttles electrons from NADH, via FMN and iron-sulfur (Fe-S) centers, to quinones in the respiratory chain. The immediate electron acceptor for the enzyme in this species is believed to be ubiquinone. Couples the redox reaction to proton translocation (for every two electrons transferred, four hydrogen ions are translocated across the cytoplasmic membrane), and thus conserves the redox energy in a proton gradient. This Solidesulfovibrio magneticus (strain ATCC 700980 / DSM 13731 / RS-1) (Desulfovibrio magneticus) protein is NADH-quinone oxidoreductase subunit N 1.